Reading from the N-terminus, the 208-residue chain is Putative dioxygenase RT0384 (208 aa).

The protein belongs to the intradiol ring-cleavage dioxygenase family.

In Rickettsia typhi (strain ATCC VR-144 / Wilmington), this protein is Putative dioxygenase RT0384.